A 420-amino-acid chain; its full sequence is Gamma-glutamyl phosphate reductase (420 aa).

The protein belongs to the gamma-glutamyl phosphate reductase family.

It localises to the cytoplasm. It carries out the reaction L-glutamate 5-semialdehyde + phosphate + NADP(+) = L-glutamyl 5-phosphate + NADPH + H(+). The protein operates within amino-acid biosynthesis; L-proline biosynthesis; L-glutamate 5-semialdehyde from L-glutamate: step 2/2. Functionally, catalyzes the NADPH-dependent reduction of L-glutamate 5-phosphate into L-glutamate 5-semialdehyde and phosphate. The product spontaneously undergoes cyclization to form 1-pyrroline-5-carboxylate. In Streptococcus pneumoniae (strain 70585), this protein is Gamma-glutamyl phosphate reductase.